The following is a 147-amino-acid chain: Sentan (147 aa).

The segment at 14–34 is disordered; sequence RLEGEPNPPAAPTSTLAPKNM. Over residues 25-34 the composition is skewed to polar residues; sequence PTSTLAPKNM.

This sequence belongs to the S-100 family.

Its subcellular location is the cell projection. The protein localises to the cilium. Its function is as follows. May be a component of the linker structure that bridges the ciliary membrane and peripheral singlet microtubules. In Bos taurus (Bovine), this protein is Sentan (SNTN).